The chain runs to 122 residues: Large ribosomal subunit protein uL14c (122 aa).

The protein belongs to the universal ribosomal protein uL14 family. In terms of assembly, part of the 50S ribosomal subunit.

The protein resides in the plastid. In terms of biological role, binds to 23S rRNA. The chain is Large ribosomal subunit protein uL14c (rpl14) from Helicosporidium sp. subsp. Simulium jonesii (Green alga).